Here is a 226-residue protein sequence, read N- to C-terminus: Leucyl/phenylalanyl-tRNA--protein transferase (226 aa).

This sequence belongs to the L/F-transferase family.

The protein localises to the cytoplasm. It carries out the reaction N-terminal L-lysyl-[protein] + L-leucyl-tRNA(Leu) = N-terminal L-leucyl-L-lysyl-[protein] + tRNA(Leu) + H(+). It catalyses the reaction N-terminal L-arginyl-[protein] + L-leucyl-tRNA(Leu) = N-terminal L-leucyl-L-arginyl-[protein] + tRNA(Leu) + H(+). The catalysed reaction is L-phenylalanyl-tRNA(Phe) + an N-terminal L-alpha-aminoacyl-[protein] = an N-terminal L-phenylalanyl-L-alpha-aminoacyl-[protein] + tRNA(Phe). Functions in the N-end rule pathway of protein degradation where it conjugates Leu, Phe and, less efficiently, Met from aminoacyl-tRNAs to the N-termini of proteins containing an N-terminal arginine or lysine. The chain is Leucyl/phenylalanyl-tRNA--protein transferase from Salinibacter ruber (strain DSM 13855 / M31).